We begin with the raw amino-acid sequence, 312 residues long: Small ribosomal subunit protein uS2m (312 aa).

Belongs to the universal ribosomal protein uS2 family.

The protein resides in the mitochondrion. The chain is Small ribosomal subunit protein uS2m (RPS2) from Acanthamoeba castellanii (Amoeba).